The chain runs to 137 residues: Small ribosomal subunit protein bS6 (137 aa).

Positions 96-137 are disordered; sequence ITEASPMAKAKDERDTRRSSEERAPRAEATEEVKESAENTAE. The span at 104 to 137 shows a compositional bias: basic and acidic residues; the sequence is KAKDERDTRRSSEERAPRAEATEEVKESAENTAE.

The protein belongs to the bacterial ribosomal protein bS6 family.

Binds together with bS18 to 16S ribosomal RNA. The protein is Small ribosomal subunit protein bS6 of Shewanella piezotolerans (strain WP3 / JCM 13877).